The following is a 354-amino-acid chain: Ferrochelatase (354 aa).

2 residues coordinate Fe cation: His214 and Glu295.

This sequence belongs to the ferrochelatase family.

It is found in the cytoplasm. It carries out the reaction heme b + 2 H(+) = protoporphyrin IX + Fe(2+). Its pathway is porphyrin-containing compound metabolism; protoheme biosynthesis; protoheme from protoporphyrin-IX: step 1/1. In terms of biological role, catalyzes the ferrous insertion into protoporphyrin IX. The protein is Ferrochelatase of Burkholderia orbicola (strain MC0-3).